Here is a 258-residue protein sequence, read N- to C-terminus: Spindlin-2 (258 aa).

The interval 1-47 (MKTPHKKATARQQTREIVDDHTLSASMRKKKISQKKQRGRPSSQTRR) is disordered. A compositionally biased stretch (basic and acidic residues) spans 13–22 (QTREIVDDHT). Positions 27–39 (MRKKKISQKKQRG) are enriched in basic residues. Tudor-like domain regions lie at residues 50 to 99 (VGCR…LELH), 129 to 178 (IGKA…YQLL), and 210 to 255 (IGKH…YDLV). 2 histone H3K4me3 and H3R8me2a binding regions span residues E138 and 246 to 248 (DFH).

The protein belongs to the SPIN/STSY family. In terms of assembly, interacts with C11orf84/SPINDOC.

The protein resides in the nucleus. Functionally, may be involved in the regulation of cell cycle progression. Exhibits H3K4me3-binding activity. This Bos taurus (Bovine) protein is Spindlin-2 (SPIN2).